The chain runs to 77 residues: Acyl carrier protein (77 aa).

Positions 1–76 (MADFEKIKSI…DVIKFIDKLK (76 aa)) constitute a Carrier domain. Ser36 carries the O-(pantetheine 4'-phosphoryl)serine modification.

The protein belongs to the acyl carrier protein (ACP) family. In terms of processing, 4'-phosphopantetheine is transferred from CoA to a specific serine of apo-ACP by AcpS. This modification is essential for activity because fatty acids are bound in thioester linkage to the sulfhydryl of the prosthetic group.

It is found in the cytoplasm. The protein operates within lipid metabolism; fatty acid biosynthesis. Its function is as follows. Carrier of the growing fatty acid chain in fatty acid biosynthesis. This chain is Acyl carrier protein, found in Leptospira biflexa serovar Patoc (strain Patoc 1 / Ames).